The chain runs to 527 residues: Putative WEB family protein At4g17210 (527 aa).

Disordered regions lie at residues 1–28 and 46–70; these read MAKI…IDTR and FSKK…TDVS. Over residues 55-68 the composition is skewed to low complexity; sequence SSSSSSQSQDTTTD. Coiled-coil stretches lie at residues 95 to 159, 202 to 389, and 436 to 513; these read AAKA…YILI, SNKI…AKHM, and KKIR…EAHS.

It belongs to the WEB family.

This is Putative WEB family protein At4g17210 from Arabidopsis thaliana (Mouse-ear cress).